Consider the following 321-residue polypeptide: Malate dehydrogenase (321 aa).

Residues 10 to 15 (GAGQIG) and aspartate 34 each bind NAD(+). Substrate is bound by residues arginine 83 and arginine 89. Residues asparagine 96 and 119-121 (VTN) each bind NAD(+). Asparagine 121 and arginine 152 together coordinate substrate. Catalysis depends on histidine 176, which acts as the Proton acceptor.

It belongs to the LDH/MDH superfamily. MDH type 3 family.

It carries out the reaction (S)-malate + NAD(+) = oxaloacetate + NADH + H(+). Its function is as follows. Catalyzes the reversible oxidation of malate to oxaloacetate. In Azorhizobium caulinodans (strain ATCC 43989 / DSM 5975 / JCM 20966 / LMG 6465 / NBRC 14845 / NCIMB 13405 / ORS 571), this protein is Malate dehydrogenase.